We begin with the raw amino-acid sequence, 312 residues long: Olfactory receptor 2C1 (312 aa).

Over methionine 1–glutamate 24 the chain is Extracellular. N-linked (GlcNAc...) asparagine glycosylation occurs at asparagine 6. A helical transmembrane segment spans residues isoleucine 25–leucine 48. Residues serine 49 to threonine 57 are Cytoplasmic-facing. The helical transmembrane segment at proline 58–proline 79 threads the bilayer. The Extracellular portion of the chain corresponds to glutamine 80 to glutamine 100. A disulfide bridge links cysteine 97 with cysteine 189. The helical transmembrane segment at leucine 101–phenylalanine 120 threads the bilayer. At aspartate 121–arginine 139 the chain is on the cytoplasmic side. Residues leucine 140–serine 160 traverse the membrane as a helical segment. The Extracellular segment spans residues threonine 161 to asparagine 200. The helical transmembrane segment at glycine 201–alanine 222 threads the bilayer. The Cytoplasmic segment spans residues glutamine 223–lysine 236. A helical membrane pass occupies residues alanine 237–leucine 261. Topologically, residues proline 262 to lysine 272 are extracellular. A helical membrane pass occupies residues phenylalanine 273–leucine 292. Over arginine 293–serine 312 the chain is Cytoplasmic.

The protein belongs to the G-protein coupled receptor 1 family. In terms of tissue distribution, olfactory epithelium. Present in various subcellular compartments of the olfactory sensory neurons, particularly in the axonal processes and neve terminals.

The protein localises to the cell membrane. In terms of biological role, olfactory receptor that is activated by the binding of organosulfur odorants with thioether groups such as (methylthio)methanetiol (MTMT). Also binds odorants acetophenone and benzaldehyde. The activity of this receptor is mediated by G proteins which activate adenylyl cyclase. May be involved in the molecular processes underlying fasciculation and targeting of olfactory axons. The chain is Olfactory receptor 2C1 from Mus musculus (Mouse).